The primary structure comprises 655 residues: p-hydroxybenzoic acid efflux pump subunit AaeB (655 aa).

The next 11 membrane-spanning stretches (helical) occupy residues 13–33 (FAVKLATAIVLALFVGFHFQL), 38–58 (WAVLTAAIVAAGPAFAAGGEP), 69–89 (LRIIGTFIGCIAGLVIIIAMI), 93–113 (LLMILVCCIWAGFCTWISSLV), 121–141 (WGLAGYTALIIVITIQPEPLL), 152–172 (EIVIGIVCAIIADLLFSPRSI), 370–390 (LFWLWTGWTSGSGAMVMIAVV), 407–427 (FIYGTLAALPLGLLYFLVIIP), 431–451 (QSMLLLCISLAVLGFFLGIEV), 455–475 (LLGSMGALASTINIIVLDNPM), and 482–502 (FLDSALGQIVGCVLAFTVILL).

It belongs to the aromatic acid exporter ArAE (TC 2.A.85) family.

The protein resides in the cell inner membrane. In terms of biological role, forms an efflux pump with AaeA. Could function as a metabolic relief valve, allowing to eliminate certain compounds when they accumulate to high levels in the cell. This chain is p-hydroxybenzoic acid efflux pump subunit AaeB, found in Shigella boydii serotype 4 (strain Sb227).